The following is a 642-amino-acid chain: 1-deoxy-D-xylulose-5-phosphate synthase (642 aa).

Thiamine diphosphate contacts are provided by residues His73 and Ser114 to Ala116. Asp145 contributes to the Mg(2+) binding site. Thiamine diphosphate is bound by residues Gly146–Ala147, Asn175, Phe286, and Glu367. Position 175 (Asn175) interacts with Mg(2+).

This sequence belongs to the transketolase family. DXPS subfamily. Homodimer. Mg(2+) serves as cofactor. Thiamine diphosphate is required as a cofactor.

The enzyme catalyses D-glyceraldehyde 3-phosphate + pyruvate + H(+) = 1-deoxy-D-xylulose 5-phosphate + CO2. It functions in the pathway metabolic intermediate biosynthesis; 1-deoxy-D-xylulose 5-phosphate biosynthesis; 1-deoxy-D-xylulose 5-phosphate from D-glyceraldehyde 3-phosphate and pyruvate: step 1/1. Its function is as follows. Catalyzes the acyloin condensation reaction between C atoms 2 and 3 of pyruvate and glyceraldehyde 3-phosphate to yield 1-deoxy-D-xylulose-5-phosphate (DXP). This Saccharopolyspora erythraea (strain ATCC 11635 / DSM 40517 / JCM 4748 / NBRC 13426 / NCIMB 8594 / NRRL 2338) protein is 1-deoxy-D-xylulose-5-phosphate synthase.